The following is a 303-amino-acid chain: 4-hydroxy-tetrahydrodipicolinate synthase (303 aa).

Thr-57 is a binding site for pyruvate. Residue Tyr-143 is the Proton donor/acceptor of the active site. The active-site Schiff-base intermediate with substrate is the Lys-171. Residue Ile-211 participates in pyruvate binding.

The protein belongs to the DapA family. In terms of assembly, homotetramer; dimer of dimers.

The protein resides in the cytoplasm. It catalyses the reaction L-aspartate 4-semialdehyde + pyruvate = (2S,4S)-4-hydroxy-2,3,4,5-tetrahydrodipicolinate + H2O + H(+). The protein operates within amino-acid biosynthesis; L-lysine biosynthesis via DAP pathway; (S)-tetrahydrodipicolinate from L-aspartate: step 3/4. Its function is as follows. Catalyzes the condensation of (S)-aspartate-beta-semialdehyde [(S)-ASA] and pyruvate to 4-hydroxy-tetrahydrodipicolinate (HTPA). The protein is 4-hydroxy-tetrahydrodipicolinate synthase of Bifidobacterium animalis subsp. lactis (strain AD011).